A 277-amino-acid chain; its full sequence is 5'-nucleotidase SurE (277 aa).

A divalent metal cation contacts are provided by aspartate 16, aspartate 17, serine 48, and asparagine 101.

Belongs to the SurE nucleotidase family. A divalent metal cation is required as a cofactor.

The protein resides in the cytoplasm. It carries out the reaction a ribonucleoside 5'-phosphate + H2O = a ribonucleoside + phosphate. In terms of biological role, nucleotidase that shows phosphatase activity on nucleoside 5'-monophosphates. In Parvibaculum lavamentivorans (strain DS-1 / DSM 13023 / NCIMB 13966), this protein is 5'-nucleotidase SurE.